A 274-amino-acid chain; its full sequence is Tyrosinase (274 aa).

Cu cation is bound by residues His38, His54, His63, His190, His194, and His216.

Belongs to the tyrosinase family. Cu(2+) is required as a cofactor.

It catalyses the reaction 2 L-dopa + O2 = 2 L-dopaquinone + 2 H2O. The enzyme catalyses L-tyrosine + O2 = L-dopaquinone + H2O. Its function is as follows. This is a copper-containing oxidase that functions in the formation of pigments such as melanins and other polyphenolic compounds. The sequence is that of Tyrosinase (melC2) from Streptomyces glaucescens.